The following is a 146-amino-acid chain: MAAEKKTEVLEKKISIKPRYKMTRGIQVETLMKCADNSGAKILRCIGVKRYRGRLNRLPAAAPGDICVVSVKKGKPELRKKVHYAILIRQKKIWRRTDGSHIMFEDNAAVLINNKGELRGAQIAGPVPREVADMWPKISSQASSIN.

Belongs to the universal ribosomal protein uL14 family.

The sequence is that of Large ribosomal subunit protein uL14 (RPL23) from Encephalitozoon cuniculi (strain GB-M1) (Microsporidian parasite).